We begin with the raw amino-acid sequence, 440 residues long: GTPase Obg (440 aa).

Residues 5 to 163 (STFVDQTKIE…RTLRLELKVL (159 aa)) form the Obg domain. The 175-residue stretch at 164–338 (ADVGLVGFPS…LMSRAADLVS (175 aa)) folds into the OBG-type G domain. Residues 170–177 (GFPSVGKS), 195–199 (FTTLK), 217–220 (DLPG), 288–291 (SQMD), and 319–321 (SSV) each bind GTP. Residues Ser-177 and Thr-197 each coordinate Mg(2+). Residues 362–440 (YHRPEKMEFT…IGDFSFEFVQ (79 aa)) enclose the OCT domain.

This sequence belongs to the TRAFAC class OBG-HflX-like GTPase superfamily. OBG GTPase family. Monomer. It depends on Mg(2+) as a cofactor.

Its subcellular location is the cytoplasm. In terms of biological role, an essential GTPase which binds GTP, GDP and possibly (p)ppGpp with moderate affinity, with high nucleotide exchange rates and a fairly low GTP hydrolysis rate. Plays a role in control of the cell cycle, stress response, ribosome biogenesis and in those bacteria that undergo differentiation, in morphogenesis control. This is GTPase Obg from Lactobacillus delbrueckii subsp. bulgaricus (strain ATCC 11842 / DSM 20081 / BCRC 10696 / JCM 1002 / NBRC 13953 / NCIMB 11778 / NCTC 12712 / WDCM 00102 / Lb 14).